The sequence spans 900 residues: Chaperone protein ClpB 2 (900 aa).

One can recognise a Clp R domain in the interval 15 to 154; the sequence is PDRFSDPAWE…ESLLRQPSVS (140 aa). 2 repeat regions span residues 18–81 and 91–154; these read FSDP…LADQ and IGED…PSVS. The segment at 151-183 is disordered; sequence PSVSPAPAPPPVPTAASAPAPTPRSAPAPRVMA. Pro residues predominate over residues 154 to 163; the sequence is SPAPAPPPVP. The NBD1 stretch occupies residues 191-376; it reads ELEREPSALE…RRFQQVLIRE (186 aa). 244 to 251 is a binding site for ATP; that stretch reads GEPGVGKT. A linker region spans residues 377-581; the sequence is PDLELSLEIL…IADLVARWTG (205 aa). A coiled-coil region spans residues 427–557; that stretch reads IDLIDEAAAQ…LEASQAEAQS (131 aa). Positions 591–803 are NBD2; sequence ERRKLLALES…RIDEVIRFRP (213 aa). An ATP-binding site is contributed by 641–648; the sequence is GPTGVGKT. Positions 804-900 are C-terminal; the sequence is LKVKDLVRIV…GASLEFEPLE (97 aa).

This sequence belongs to the ClpA/ClpB family. As to quaternary structure, homohexamer. The oligomerization is ATP-dependent.

It is found in the cytoplasm. Its function is as follows. Part of a stress-induced multi-chaperone system, it is involved in the recovery of the cell from heat-induced damage, in cooperation with DnaK, DnaJ and GrpE. Acts before DnaK, in the processing of protein aggregates. Protein binding stimulates the ATPase activity; ATP hydrolysis unfolds the denatured protein aggregates, which probably helps expose new hydrophobic binding sites on the surface of ClpB-bound aggregates, contributing to the solubilization and refolding of denatured protein aggregates by DnaK. The sequence is that of Chaperone protein ClpB 2 (clpB2) from Parasynechococcus marenigrum (strain WH8102).